The following is a 370-amino-acid chain: NAD-dependent histone deacetylase HST4 (370 aa).

The tract at residues 1 to 27 (MKQKFVLPITPPSTAEKKPQTENRCNE) is disordered. The segment covering 15–27 (AEKKPQTENRCNE) has biased composition (basic and acidic residues). Positions 75-370 (RHHMDRDAGF…GDCQHVTSLL (296 aa)) constitute a Deacetylase sirtuin-type domain. Residues 100-119 (GAGI…EGIF) and 184-187 (QNID) contribute to the NAD(+) site. H213 acts as the Proton acceptor in catalysis. Zn(2+)-binding residues include C221, C224, C251, and C254. NAD(+) is bound by residues 310–312 (GTS), 340–342 (NTS), and C363.

It belongs to the sirtuin family. Class I subfamily. Zn(2+) serves as cofactor.

It is found in the nucleus. The catalysed reaction is N(6)-acetyl-L-lysyl-[protein] + NAD(+) + H2O = 2''-O-acetyl-ADP-D-ribose + nicotinamide + L-lysyl-[protein]. Its function is as follows. NAD-dependent histone deacetylase, which contributes together with HST3 to histone H3 'Lys-56' deacetylation, regulation of telomeric silencing, proper cell cycle progression, DNA damage control, DNA recombination, and genomic maintenance. In Saccharomyces cerevisiae (strain ATCC 204508 / S288c) (Baker's yeast), this protein is NAD-dependent histone deacetylase HST4 (HST4).